The primary structure comprises 286 residues: Bifunctional protein FolD (286 aa).

166–168 serves as a coordination point for NADP(+); sequence GAS.

The protein belongs to the tetrahydrofolate dehydrogenase/cyclohydrolase family. As to quaternary structure, homodimer.

The catalysed reaction is (6R)-5,10-methylene-5,6,7,8-tetrahydrofolate + NADP(+) = (6R)-5,10-methenyltetrahydrofolate + NADPH. It carries out the reaction (6R)-5,10-methenyltetrahydrofolate + H2O = (6R)-10-formyltetrahydrofolate + H(+). Its pathway is one-carbon metabolism; tetrahydrofolate interconversion. Catalyzes the oxidation of 5,10-methylenetetrahydrofolate to 5,10-methenyltetrahydrofolate and then the hydrolysis of 5,10-methenyltetrahydrofolate to 10-formyltetrahydrofolate. This is Bifunctional protein FolD from Idiomarina loihiensis (strain ATCC BAA-735 / DSM 15497 / L2-TR).